Here is a 452-residue protein sequence, read N- to C-terminus: UDP-N-acetylmuramoyl-L-alanine--L-glutamate ligase (452 aa).

118-124 (GSKGKST) provides a ligand contact to ATP.

Belongs to the MurCDEF family. MurD2 subfamily.

It is found in the cytoplasm. The enzyme catalyses UDP-N-acetyl-alpha-D-muramoyl-L-alanine + L-glutamate + ATP = UDP-N-acetyl-alpha-D-muramoyl-L-alanyl-L-glutamate + ADP + phosphate + H(+). The protein operates within cell wall biogenesis; peptidoglycan biosynthesis. Its function is as follows. Cell wall formation. Catalyzes the addition of L-glutamate to the nucleotide precursor UDP-N-acetylmuramoyl-L-alanine. The sequence is that of UDP-N-acetylmuramoyl-L-alanine--L-glutamate ligase from Micromonospora sp. (strain ATCC 39149 / NRRL 15099 / SCC 1413).